Reading from the N-terminus, the 926-residue chain is Serine/threonine-protein kinase/endoribonuclease IRE2 (926 aa).

The N-terminal stretch at Met1 to Thr34 is a signal peptide. Residues Leu35–Pro430 lie on the Lumenal side of the membrane. The helical transmembrane segment at Gln431–Met451 threads the bilayer. At Arg452–Arg926 the chain is on the cytoplasmic side. A compositionally biased stretch (polar residues) spans Asp478–Ala501. The disordered stretch occupies residues Asp478 to Ala509. In terms of domain architecture, Protein kinase spans Phe520–Phe781. ATP-binding positions include Leu526–Phe534 and Lys548. Asp637 (proton acceptor) is an active-site residue. In terms of domain architecture, KEN spans Arg784–Pro912.

Belongs to the protein kinase superfamily. Ser/Thr protein kinase family. It depends on Mg(2+) as a cofactor. Post-translationally, autophosphorylated.

The protein localises to the endoplasmic reticulum membrane. The enzyme catalyses L-seryl-[protein] + ATP = O-phospho-L-seryl-[protein] + ADP + H(+). It carries out the reaction L-threonyl-[protein] + ATP = O-phospho-L-threonyl-[protein] + ADP + H(+). Its activity is regulated as follows. The kinase domain is activated by trans-autophosphorylation. Kinase activity is required for activation of the endoribonuclease domain. Functionally, induces translational repression through 28S ribosomal RNA cleavage in response to ER stress. Pro-apoptotic. Appears to play no role in the unfolded-protein response, unlike closely related proteins. In Homo sapiens (Human), this protein is Serine/threonine-protein kinase/endoribonuclease IRE2.